The chain runs to 142 residues: Large ribosomal subunit protein uL13 (142 aa).

This sequence belongs to the universal ribosomal protein uL13 family. In terms of assembly, part of the 50S ribosomal subunit.

Its function is as follows. This protein is one of the early assembly proteins of the 50S ribosomal subunit, although it is not seen to bind rRNA by itself. It is important during the early stages of 50S assembly. This Shewanella denitrificans (strain OS217 / ATCC BAA-1090 / DSM 15013) protein is Large ribosomal subunit protein uL13.